Consider the following 468-residue polypeptide: Putative ankyrin repeat protein R580 (468 aa).

ANK repeat units lie at residues 12–41, 189–218, 249–278, 336–365, 367–393, and 394–423; these read DYFD…TLID, VINK…EINC, CHFD…KINS, SFDN…NINF, NMPT…DLEI, and HGTL…KFSL.

This is Putative ankyrin repeat protein R580 from Acanthamoeba polyphaga (Amoeba).